Reading from the N-terminus, the 210-residue chain is Orotate phosphoribosyltransferase (210 aa).

5-phospho-alpha-D-ribose 1-diphosphate is bound by residues arginine 94, lysine 98, histidine 100, and 120–128 (EDLISTGGS). Orotate is bound at residue serine 124.

Belongs to the purine/pyrimidine phosphoribosyltransferase family. PyrE subfamily. In terms of assembly, homodimer. Mg(2+) serves as cofactor.

It carries out the reaction orotidine 5'-phosphate + diphosphate = orotate + 5-phospho-alpha-D-ribose 1-diphosphate. It functions in the pathway pyrimidine metabolism; UMP biosynthesis via de novo pathway; UMP from orotate: step 1/2. In terms of biological role, catalyzes the transfer of a ribosyl phosphate group from 5-phosphoribose 1-diphosphate to orotate, leading to the formation of orotidine monophosphate (OMP). This chain is Orotate phosphoribosyltransferase, found in Halalkalibacterium halodurans (strain ATCC BAA-125 / DSM 18197 / FERM 7344 / JCM 9153 / C-125) (Bacillus halodurans).